The chain runs to 71 residues: Serine palmitoyltransferase small subunit A (71 aa).

Residues 1-12 (MAGMALARAWKQ) are Cytoplasmic-facing. Residues 13–29 (MSWFYYQYLLVTALYML) form a helical membrane-spanning segment. Residues 30-34 (EPWER) are Lumenal-facing. Residues 35–57 (TVFNSMLVSVVGMALYTGYVFMP) form a helical membrane-spanning segment. Over 58 to 71 (QHIMAILHYFEIVQ) the chain is Cytoplasmic.

Belongs to the SPTSS family. SPTSSA subfamily. In terms of assembly, component of the serine palmitoyltransferase (SPT) complex, which is composed of SPTLC1, SPTLC2 or SPTLC3 and SPTSSA or SPTSSB. The heterodimer consisting of SPTLC1 and SPTLC2/SPTLC3 forms the catalytic core of the enzyme, while SPTSSA or SPTSSB subunits determine substrate specificity. SPT also interacts with ORMDL proteins, especially ORMDL3, which negatively regulate SPT activity in the presence of ceramides. Interacts with MBOAT7; the interaction plays a role in MBOAT7 localization to mitochondria-associated membranes.

The protein resides in the endoplasmic reticulum membrane. It participates in lipid metabolism; sphingolipid metabolism. Its function is as follows. Component of the serine palmitoyltransferase multisubunit enzyme (SPT) that catalyzes the initial and rate-limiting step in sphingolipid biosynthesis by condensing L-serine and activated acyl-CoA (most commonly palmitoyl-CoA) to form long-chain bases. The SPT complex is composed of SPTLC1, SPTLC2 or SPTLC3 and SPTSSA or SPTSSB. Within this complex, the heterodimer consisting of SPTLC1 and SPTLC2/SPTLC3 forms the catalytic core. Within the SPT complex, SPTSSA stimulates the catalytic activity and plays a role in substrate specificity, which depends upon the overall complex composition. The SPTLC1-SPTLC2-SPTSSA complex shows a strong preference for C16-CoA substrate, while the SPTLC1-SPTLC3-SPTSSA isozyme uses both C14-CoA and C16-CoA as substrates, with a slight preference for C14-CoA. Independently of its action as a SPT component, may be involved in MBOAT7 localization to mitochondria-associated membranes, a membrane bridge between the endoplasmic reticulum and mitochondria, may hence affect MBOAT7-catalyzed incorporation of arachidonic acid into phosphatidylinositol. This Mus musculus (Mouse) protein is Serine palmitoyltransferase small subunit A.